Reading from the N-terminus, the 274-residue chain is MQNITQSWFVQGMIKATTDAWLKGWDERNGGNLTLRLDDADIAPYKDNVHAQPRYIPLSQPMPLLANTPFIVTGSGKFFRNVQLDPAANLGVVKVDSDGAGYHILWGLTNEAVPTSELPAHFLSHCERIKATNGKDRVIMHCHATNLIALTYVLENDTAVFTRQLWEGSTECLVVFPDGVGILPWMVPGTDEIGQATAQEMQKHSLVLWPFHGVFGSGSTLDETFGLIDTAEKSAQVLVKVYSMGGMKQTISREELIALGKRFGVTPLASALAL.

The active site involves Glu117. His141, His143, and His212 together coordinate Zn(2+).

Belongs to the aldolase class II family. RhaD subfamily. As to quaternary structure, homotetramer. Requires Zn(2+) as cofactor.

It is found in the cytoplasm. It carries out the reaction L-rhamnulose 1-phosphate = (S)-lactaldehyde + dihydroxyacetone phosphate. It functions in the pathway carbohydrate degradation; L-rhamnose degradation; glycerone phosphate from L-rhamnose: step 3/3. In terms of biological role, catalyzes the reversible cleavage of L-rhamnulose-1-phosphate to dihydroxyacetone phosphate (DHAP) and L-lactaldehyde. The sequence is that of Rhamnulose-1-phosphate aldolase from Shigella boydii serotype 4 (strain Sb227).